A 29-amino-acid polypeptide reads, in one-letter code: Trypsin inhibitor 1 (29 aa).

Cystine bridges form between C3-C20, C10-C22, and C16-C28.

The protein belongs to the protease inhibitor I7 (squash-type serine protease inhibitor) family.

Its subcellular location is the secreted. Functionally, inhibits trypsin. In Cucurbita maxima (Pumpkin), this protein is Trypsin inhibitor 1.